The primary structure comprises 256 residues: Calsenilin (256 aa).

Residues M1–V30 form a disordered region. S14 carries the phosphoserine modification. Residue K26 forms a Glycyl lysine isopeptide (Lys-Gly) (interchain with G-Cter in SUMO1) linkage. 2 S-palmitoyl cysteine lipidation sites follow: C45 and C46. 2 positions are modified to phosphoserine: S60 and S63. The EF-hand 1; degenerate domain occupies L67–P123. K90 is covalently cross-linked (Glycyl lysine isopeptide (Lys-Gly) (interchain with G-Cter in SUMO1)). 3 consecutive EF-hand domains span residues D126–G161, T162–M197, and A210–I245. Residues D175, N177, D179, Y181, E186, D223, N225, D227, and E234 each coordinate Ca(2+). The interval E243–I256 is interaction with KCND2.

It belongs to the recoverin family. As to quaternary structure, binds to DNA as a homomultimer. Dimerization is induced by binding to calcium. Interacts with the C-terminus of PSEN1 and PSEN2 and with PSEN2 CTF subunit. Associates with KCN1. Component of heteromultimeric potassium channels. Identified in potassium channel complexes containing KCND1, KCND2, KCND3, KCNIP1, KCNIP2, KCNIP3, KCNIP4, DPP6 and DPP10. Interacts with KCND2 and KCND3. Palmitoylated. Palmitoylation enhances association with the plasma membrane. Post-translationally, proteolytically cleaved by caspase-3.

Its subcellular location is the cytoplasm. The protein localises to the cell membrane. It is found in the endoplasmic reticulum. The protein resides in the golgi apparatus. It localises to the nucleus. Regulatory subunit of Kv4/D (Shal)-type voltage-gated rapidly inactivating A-type potassium channels, such as KCND2/Kv4.2 and KCND3/Kv4.3. Modulates channel expression at the cell membrane, gating characteristics, inactivation kinetics and rate of recovery from inactivation in a calcium-dependent and isoform-specific manner. In terms of biological role, may play a role in the regulation of PSEN2 proteolytic processing and apoptosis. Together with PSEN2 involved in modulation of amyloid-beta formation. Functionally, calcium-dependent transcriptional repressor that binds to the DRE element of genes including PDYN and FOS. Affinity for DNA is reduced upon binding to calcium and enhanced by binding to magnesium. Seems to be involved in nociception. The polypeptide is Calsenilin (KCNIP3) (Bos taurus (Bovine)).